Here is a 306-residue protein sequence, read N- to C-terminus: Aspartate carbamoyltransferase catalytic subunit (306 aa).

Positions 54 and 55 each coordinate carbamoyl phosphate. Lysine 83 serves as a coordination point for L-aspartate. The carbamoyl phosphate site is built by arginine 104, histidine 132, and glutamine 135. The L-aspartate site is built by arginine 165 and arginine 227. Carbamoyl phosphate contacts are provided by leucine 266 and proline 267.

Belongs to the aspartate/ornithine carbamoyltransferase superfamily. ATCase family. Heterododecamer (2C3:3R2) of six catalytic PyrB chains organized as two trimers (C3), and six regulatory PyrI chains organized as three dimers (R2).

The enzyme catalyses carbamoyl phosphate + L-aspartate = N-carbamoyl-L-aspartate + phosphate + H(+). Its pathway is pyrimidine metabolism; UMP biosynthesis via de novo pathway; (S)-dihydroorotate from bicarbonate: step 2/3. Catalyzes the condensation of carbamoyl phosphate and aspartate to form carbamoyl aspartate and inorganic phosphate, the committed step in the de novo pyrimidine nucleotide biosynthesis pathway. In Clostridium novyi (strain NT), this protein is Aspartate carbamoyltransferase catalytic subunit.